Here is an 84-residue protein sequence, read N- to C-terminus: RNA-binding protein Hfq (84 aa).

Residues 10–70 form the Sm domain; the sequence is DNVLNQVRKN…VSTIIPGKTL (61 aa).

It belongs to the Hfq family. Homohexamer.

In terms of biological role, RNA chaperone that binds small regulatory RNA (sRNAs) and mRNAs to facilitate mRNA translational regulation in response to envelope stress, environmental stress and changes in metabolite concentrations. Also binds with high specificity to tRNAs. In Natranaerobius thermophilus (strain ATCC BAA-1301 / DSM 18059 / JW/NM-WN-LF), this protein is RNA-binding protein Hfq.